A 527-amino-acid polypeptide reads, in one-letter code: Fusicoccadiene C-8 hydroxylase (527 aa).

Residues Gly-15 to Phe-35 traverse the membrane as a helical segment. Residue Asn-125 is glycosylated (N-linked (GlcNAc...) asparagine). Cys-465 contacts heme. Residue Asn-496 is glycosylated (N-linked (GlcNAc...) asparagine).

This sequence belongs to the cytochrome P450 family. Heme serves as cofactor.

It is found in the membrane. It functions in the pathway mycotoxin biosynthesis. Cytochrome P450 monooxygenase; part of the gene cluster that mediates the biosynthesis of the diterpene glucoside brassicicene C. In the first step of the brassicicene C biosynthesis, the bifunctional diterpene synthase bsc8 that possesses both prenyl transferase and terpene cyclase activity, converts isopentenyl diphosphate and dimethylallyl diphosphate into geranylgeranyl diphosphate (GGDP) that is further converted into fusicocca-2,10(14)-diene, the first precursor for brassicicene C. Fusicocca-2,10(14)-diene is then substrate of cytochrome P450 monooxygenase bsc1 for hydroxylation at the C-8 position. Oxidation at C-16 position to aldehyde is then catalyzed by the cytochrome P450 monooyxygenase bsc7, yielding fusicocca-2,10(14)-diene-8-beta,16-diol. Follows the isomerization of the double bond and reduction of aldehyde to alcohol catalyzed by the short-chain dehydrogenase/reductase bsc3 to yield the diol compound fusicocca-1,10(14)-diene-8 beta,16-diol. The next step is the oxidation at the C-3 position of fusicocca-2,10(14)-diene-8-beta,16-diol catalyzed by the alpha-ketoglutarate dependent dioxygenase bsc9, to produce a triol compound. Methylation of the hydroxy group at position 16 is performed by the methyltransferase bsc6. 16-O-methylation is followed by oxidation at the C-13 position to ketone and an alkyl shift of the methyl group leads to brassicicene C. Although the probable acetyltransferase bsc4 is included in the gene cluster, no acetylation reactions are necessary for brassicicene C biosynthesis. However, the fact that brassicicene E, which is a structurally related compound having an acetoxy group at position 12, was previously isolated from another strain of A.brassicicola suggests that the ATCC 96836 strain might also produce a small amount of brassicicene E. The chain is Fusicoccadiene C-8 hydroxylase from Alternaria brassicicola (Dark leaf spot agent).